We begin with the raw amino-acid sequence, 550 residues long: Glucose-6-phosphate isomerase (550 aa).

The Proton donor role is filled by Glu-357. Residues His-389 and Lys-509 contribute to the active site.

Belongs to the GPI family.

Its subcellular location is the cytoplasm. The enzyme catalyses alpha-D-glucose 6-phosphate = beta-D-fructose 6-phosphate. Its pathway is carbohydrate biosynthesis; gluconeogenesis. It functions in the pathway carbohydrate degradation; glycolysis; D-glyceraldehyde 3-phosphate and glycerone phosphate from D-glucose: step 2/4. Its function is as follows. Catalyzes the reversible isomerization of glucose-6-phosphate to fructose-6-phosphate. The sequence is that of Glucose-6-phosphate isomerase from Anaeromyxobacter dehalogenans (strain 2CP-C).